We begin with the raw amino-acid sequence, 724 residues long: Putative methyltransferase NSUN7 (724 aa).

Cys444 (nucleophile) is an active-site residue. Disordered regions lie at residues 542–574 (KTLKRDKKRKKSKALPSRAPHHGDPLRDHLAVD), 595–629 (ISTSTKMSAPAKTVSQAGTSSQVRKPSKPLSTPLV), and 698–724 (TSSTSRRKEKVKESTTSSHVRHPRPWL). Residues 543–554 (TLKRDKKRKKSK) show a composition bias toward basic residues. Over residues 562-572 (HHGDPLRDHLA) the composition is skewed to basic and acidic residues. Residues 595–618 (ISTSTKMSAPAKTVSQAGTSSQVR) show a composition bias toward polar residues.

Belongs to the class I-like SAM-binding methyltransferase superfamily. RsmB/NOP family. In terms of tissue distribution, expressed in testis.

Functionally, may have S-adenosyl-L-methionine-dependent methyl-transferase activity. This Mus musculus (Mouse) protein is Putative methyltransferase NSUN7 (Nsun7).